Consider the following 86-residue polypeptide: Small ribosomal subunit protein bS20 (86 aa).

It belongs to the bacterial ribosomal protein bS20 family.

Binds directly to 16S ribosomal RNA. This chain is Small ribosomal subunit protein bS20, found in Pseudarthrobacter chlorophenolicus (strain ATCC 700700 / DSM 12829 / CIP 107037 / JCM 12360 / KCTC 9906 / NCIMB 13794 / A6) (Arthrobacter chlorophenolicus).